A 310-amino-acid polypeptide reads, in one-letter code: Tagatose-6-phosphate kinase (310 aa).

It belongs to the carbohydrate kinase PfkB family. LacC subfamily.

It carries out the reaction D-tagatofuranose 6-phosphate + ATP = D-tagatofuranose 1,6-bisphosphate + ADP + H(+). It participates in carbohydrate metabolism; D-tagatose 6-phosphate degradation; D-glyceraldehyde 3-phosphate and glycerone phosphate from D-tagatose 6-phosphate: step 1/2. The protein is Tagatose-6-phosphate kinase of Streptococcus uberis (strain ATCC BAA-854 / 0140J).